We begin with the raw amino-acid sequence, 346 residues long: Annexin A1 (346 aa).

A2 is modified (N-acetylalanine). A Phosphoserine; by TRPM7 modification is found at S5. Q19 participates in a covalent cross-link: Isoglutamyl lysine isopeptide (Gln-Lys) (interchain with K-?). Residue Y21 is modified to Phosphotyrosine; by EGFR. S27 carries the post-translational modification Phosphoserine; by PKC. Phosphoserine occurs at positions 34 and 37. 4 Annexin repeats span residues F42–K113, T114–K185, D197–K269, and S273–G344. N6-acetyllysine is present on K58. Ca(2+)-binding residues include G59, V60, E62, K97, L100, E105, M127, G129, G131, T132, and E134. T136 is modified (phosphothreonine). D171, G210, and R213 together coordinate Ca(2+). K214 is covalently cross-linked (Glycyl lysine isopeptide (Lys-Gly) (interchain with G-Cter in SUMO1); alternate). K214 participates in a covalent cross-link: Glycyl lysine isopeptide (Lys-Gly) (interchain with G-Cter in SUMO2); alternate. Residues G215, D253, E255, and L256 each coordinate Ca(2+). A Glycyl lysine isopeptide (Lys-Gly) (interchain with G-Cter in SUMO1) cross-link involves residue K257. 4 residues coordinate Ca(2+): E261, M286, G288, and G290. K312 carries the post-translational modification N6-acetyllysine. A disulfide bridge connects residues C324 and C343. The Ca(2+) site is built by L328, E330, and T331. Residue K332 forms a Glycyl lysine isopeptide (Lys-Gly) (interchain with G-Cter in SUMO1) linkage. Ca(2+) is bound at residue E336.

It belongs to the annexin family. Homodimer; non-covalently linked. Homodimer; linked by transglutamylation. Homodimers linked by transglutamylation are observed in placenta, but not in other tissues. Interacts with S100A11. Heterotetramer, formed by two molecules each of S100A11 and ANXA1. Interacts with DYSF. Interacts with EGFR. Post-translationally, phosphorylated by protein kinase C, EGFR and TRPM7. Phosphorylated in response to EGF treatment. Sumoylated. In terms of processing, proteolytically cleaved by cathepsin CTSG to release the active N-terminal peptide Ac2-26. Detected in eosinophils. Detected in lung, placenta, spleen and thymus (at protein level).

It is found in the nucleus. It localises to the cytoplasm. Its subcellular location is the cell projection. The protein localises to the cilium. The protein resides in the basolateral cell membrane. It is found in the lateral cell membrane. It localises to the cell membrane. Its subcellular location is the apical cell membrane. The protein localises to the membrane. The protein resides in the endosome membrane. It is found in the secreted. It localises to the extracellular space. Its subcellular location is the early endosome. The protein localises to the cytoplasmic vesicle membrane. The protein resides in the extracellular exosome. It is found in the cytoplasmic vesicle. It localises to the secretory vesicle lumen. Its subcellular location is the phagocytic cup. In terms of biological role, plays important roles in the innate immune response as effector of glucocorticoid-mediated responses and regulator of the inflammatory process. Has anti-inflammatory activity. Plays a role in glucocorticoid-mediated down-regulation of the early phase of the inflammatory response. Contributes to the adaptive immune response by enhancing signaling cascades that are triggered by T-cell activation, regulates differentiation and proliferation of activated T-cells. Promotes the differentiation of T-cells into Th1 cells and negatively regulates differentiation into Th2 cells. Has no effect on unstimulated T-cells. Negatively regulates hormone exocytosis via activation of the formyl peptide receptors and reorganization of the actin cytoskeleton. Has high affinity for Ca(2+) and can bind up to eight Ca(2+) ions. Displays Ca(2+)-dependent binding to phospholipid membranes. Plays a role in the formation of phagocytic cups and phagosomes. Plays a role in phagocytosis by mediating the Ca(2+)-dependent interaction between phagosomes and the actin cytoskeleton. Functionally, functions at least in part by activating the formyl peptide receptors and downstream signaling cascades. Promotes chemotaxis of granulocytes and monocytes via activation of the formyl peptide receptors. Promotes rearrangement of the actin cytoskeleton, cell polarization and cell migration. Promotes resolution of inflammation and wound healing. Acts via neutrophil N-formyl peptide receptors to enhance the release of CXCL2. This is Annexin A1 (Anxa1) from Rattus norvegicus (Rat).